We begin with the raw amino-acid sequence, 173 residues long: Large ribosomal subunit protein uL10 (173 aa).

This sequence belongs to the universal ribosomal protein uL10 family. As to quaternary structure, part of the ribosomal stalk of the 50S ribosomal subunit. The N-terminus interacts with L11 and the large rRNA to form the base of the stalk. The C-terminus forms an elongated spine to which L12 dimers bind in a sequential fashion forming a multimeric L10(L12)X complex.

In terms of biological role, forms part of the ribosomal stalk, playing a central role in the interaction of the ribosome with GTP-bound translation factors. The sequence is that of Large ribosomal subunit protein uL10 from Thermus thermophilus (strain ATCC BAA-163 / DSM 7039 / HB27).